We begin with the raw amino-acid sequence, 600 residues long: Pescadillo homolog (600 aa).

Positions 351 to 450 constitute a BRCT domain; the sequence is PTSTLLSKFI…ELLPVSQYAP (100 aa). The segment at 454-600 is disordered; that stretch reads LPPHLSPWGD…AELGKLNKKN (147 aa). The span at 478-509 shows a compositional bias: acidic residues; sequence QGEEEEEEEEEIEGDEIEEDVEEEDEEEDEDL. Positions 478–600 form a coiled coil; sequence QGEEEEEEEE…AELGKLNKKN (123 aa). A compositionally biased stretch (basic residues) spans 530–539; the sequence is KDKKSSKGKK. Basic and acidic residues-rich tracts occupy residues 569–580 and 588–600; these read IDKKEARQDDLT and KTKA…NKKN.

Belongs to the pescadillo family. Component of the NOP7 complex, composed of ERB1, NOP7 and YTM1. The complex is held together by ERB1, which interacts with NOP7 via its N-terminal domain and with YTM1 via a high-affinity interaction between the seven-bladed beta-propeller domains of the 2 proteins. The NOP7 complex associates with the 66S pre-ribosome.

It is found in the nucleus. It localises to the nucleolus. Its subcellular location is the nucleoplasm. In terms of biological role, component of the NOP7 complex, which is required for maturation of the 25S and 5.8S ribosomal RNAs and formation of the 60S ribosome. This is Pescadillo homolog from Debaryomyces hansenii (strain ATCC 36239 / CBS 767 / BCRC 21394 / JCM 1990 / NBRC 0083 / IGC 2968) (Yeast).